A 157-amino-acid chain; its full sequence is SsrA-binding protein (157 aa).

This sequence belongs to the SmpB family.

It is found in the cytoplasm. Functionally, required for rescue of stalled ribosomes mediated by trans-translation. Binds to transfer-messenger RNA (tmRNA), required for stable association of tmRNA with ribosomes. tmRNA and SmpB together mimic tRNA shape, replacing the anticodon stem-loop with SmpB. tmRNA is encoded by the ssrA gene; the 2 termini fold to resemble tRNA(Ala) and it encodes a 'tag peptide', a short internal open reading frame. During trans-translation Ala-aminoacylated tmRNA acts like a tRNA, entering the A-site of stalled ribosomes, displacing the stalled mRNA. The ribosome then switches to translate the ORF on the tmRNA; the nascent peptide is terminated with the 'tag peptide' encoded by the tmRNA and targeted for degradation. The ribosome is freed to recommence translation, which seems to be the essential function of trans-translation. In Chromohalobacter salexigens (strain ATCC BAA-138 / DSM 3043 / CIP 106854 / NCIMB 13768 / 1H11), this protein is SsrA-binding protein.